A 319-amino-acid polypeptide reads, in one-letter code: Protein-methionine-sulfoxide reductase catalytic subunit MsrP (319 aa).

The segment at residues 1-54 (MSSFKPSRFSTARLTGDAVTPKSIYLRRREFMIGLGAIAATGAASSAFADPLEA) is a signal peptide (tat-type signal). Residues Asn75, 78 to 79 (YE), Cys133, Asn218, Arg223, and 234 to 236 (GIK) contribute to the Mo-molybdopterin site.

It belongs to the MsrP family. In terms of assembly, heterodimer of a catalytic subunit (MsrP) and a heme-binding subunit (MsrQ). Mo-molybdopterin is required as a cofactor. Predicted to be exported by the Tat system. The position of the signal peptide cleavage has not been experimentally proven.

It localises to the periplasm. It catalyses the reaction L-methionyl-[protein] + a quinone + H2O = L-methionyl-(S)-S-oxide-[protein] + a quinol. The catalysed reaction is L-methionyl-[protein] + a quinone + H2O = L-methionyl-(R)-S-oxide-[protein] + a quinol. Functionally, part of the MsrPQ system that repairs oxidized periplasmic proteins containing methionine sulfoxide residues (Met-O), using respiratory chain electrons. Thus protects these proteins from oxidative-stress damage caused by reactive species of oxygen and chlorine generated by the host defense mechanisms. MsrPQ is essential for the maintenance of envelope integrity under bleach stress, rescuing a wide series of structurally unrelated periplasmic proteins from methionine oxidation. The catalytic subunit MsrP is non-stereospecific, being able to reduce both (R-) and (S-) diastereoisomers of methionine sulfoxide. The chain is Protein-methionine-sulfoxide reductase catalytic subunit MsrP from Brucella melitensis biotype 1 (strain ATCC 23456 / CCUG 17765 / NCTC 10094 / 16M).